Consider the following 247-residue polypeptide: MRRKLAAGNWKMNGLRAALAEAEAITAAAAADGPEVLLCPPATLLAPMAAQAEGTALQIGGQYCHPAPSGAHTGHVSAPMLRDAGASYVIVGHSERRQDDGERDADVRAQTLAAWQAGLTAIVCVGETEAERDAANTLAIIGGQLAGSIPDTATGANLVVAYEPVWAIGTGRVPSVDQIGEVHDFIRARLEQRFGEGVGRSVRLLYGGSVKPGIAAEIFAVSNVDGALVGGASLKAADFTGIIAALG.

9–11 (NWK) lines the substrate pocket. Residue histidine 93 is the Electrophile of the active site. Glutamate 163 acts as the Proton acceptor in catalysis. Residues glycine 169, serine 209, and 230–231 (GG) each bind substrate.

It belongs to the triosephosphate isomerase family. As to quaternary structure, homodimer.

The protein localises to the cytoplasm. It catalyses the reaction D-glyceraldehyde 3-phosphate = dihydroxyacetone phosphate. The protein operates within carbohydrate biosynthesis; gluconeogenesis. It participates in carbohydrate degradation; glycolysis; D-glyceraldehyde 3-phosphate from glycerone phosphate: step 1/1. Involved in the gluconeogenesis. Catalyzes stereospecifically the conversion of dihydroxyacetone phosphate (DHAP) to D-glyceraldehyde-3-phosphate (G3P). The polypeptide is Triosephosphate isomerase (Dinoroseobacter shibae (strain DSM 16493 / NCIMB 14021 / DFL 12)).